The chain runs to 140 residues: Putative transcription elongation factor S-II-like protein 349L (140 aa).

The segment at 100-139 adopts a TFIIS-type zinc-finger fold; sequence GAIKCKCGSERVFSFSKQTRSGDESTSVFALCSSCKSKWV. Zn(2+)-binding residues include Cys-104, Cys-106, Cys-131, and Cys-134.

It belongs to the IIV-6 349L family.

The chain is Putative transcription elongation factor S-II-like protein 349L from Acheta domesticus (House cricket).